An 877-amino-acid chain; its full sequence is Putative leucine-rich repeat receptor-like serine/threonine-protein kinase At2g19230 (877 aa).

Positions 1 to 24 (MGNFNFLPLVSFASFVVVLVLVCA) are cleaved as a signal peptide. The Extracellular segment spans residues 25–517 (QDQSGFVSID…RNKKTERKEY (493 aa)). N-linked (GlcNAc...) asparagine glycosylation is found at N142, N233, N261, N295, N405, and N420. LRR repeat units follow at residues 439-462 (PLQK…ANLP) and 463-484 (DLTE…KLLE). Residues 518 to 538 (IIPSVASVTGLFFLLLALISF) traverse the membrane as a helical segment. At 539–877 (WQFKKRQQSV…VDPGVLPQPR (339 aa)) the chain is on the cytoplasmic side. The region spanning 569–842 (NNFERVLGQG…QVVAELKESL (274 aa)) is the Protein kinase domain. Residues 575–583 (LGQGGFGKV) and K596 each bind ATP. Y641 is modified (phosphotyrosine). Catalysis depends on D692, which acts as the Proton acceptor. Residue S726 is modified to Phosphoserine. 2 positions are modified to phosphothreonine: T727 and T732.

It belongs to the protein kinase superfamily. Ser/Thr protein kinase family.

Its subcellular location is the cell membrane. It catalyses the reaction L-seryl-[protein] + ATP = O-phospho-L-seryl-[protein] + ADP + H(+). The catalysed reaction is L-threonyl-[protein] + ATP = O-phospho-L-threonyl-[protein] + ADP + H(+). This chain is Putative leucine-rich repeat receptor-like serine/threonine-protein kinase At2g19230, found in Arabidopsis thaliana (Mouse-ear cress).